A 619-amino-acid chain; its full sequence is ETS-related transcription factor Elf-1 (619 aa).

A phosphoserine mark is found at Ser110, Ser163, Ser167, and Ser168. Positions 158–199 (EKYADSPGASSPEQPKRKKGRKTKPPRPDSPATTPNISVKKK) are disordered. The span at 173 to 182 (KRKKGRKTKP) shows a compositional bias: basic residues. At Ser187 the chain carries Phosphoserine. A Phosphothreonine modification is found at Thr190. Positions 208-290 (IYLWEFLLAL…EGQRLVYQFK (83 aa)) form a DNA-binding region, ETS. Residues 300–366 (NDEDPSSSIE…DPVEVAQPSE (67 aa)) form a disordered region. The span at 305–321 (SSSIESSDPSLSSSATS) shows a compositional bias: low complexity. The segment covering 322 to 335 (NRNQTSRSRVSSSP) has biased composition (polar residues). Position 432 is a phosphoserine (Ser432). The interval 564–592 (TLTQEVEKKESEDHLKENTEKTEQQPQPY) is disordered. Residues 568–586 (EVEKKESEDHLKENTEKTE) show a composition bias toward basic and acidic residues.

This sequence belongs to the ETS family. Binds to the underphosphorylated form of RB. May interact with other transcription factors in order to regulate specific genes. Interacts with RUNX1. In fetal tissues, it is highly expressed in heart, lung liver and kidney, and weakly expressed in brain. In adult, it is highly expressed in pancreas, spleen, thymus and peripheral blood leukocytes, expressed at moderate levels in heart, placenta, lung, liver, skeletal muscle, kidney, prostate, ovary, small intestine and colon, and weakly expressed in brain and testis.

The protein resides in the nucleus. Functionally, transcription factor that activates the LYN and BLK promoters. Appears to be required for the T-cell-receptor-mediated trans activation of HIV-2 gene expression. Binds specifically to two purine-rich motifs in the HIV-2 enhancer. The polypeptide is ETS-related transcription factor Elf-1 (ELF1) (Homo sapiens (Human)).